We begin with the raw amino-acid sequence, 38 residues long: Photosystem II reaction center protein L (38 aa).

The chain crosses the membrane as a helical span at residues 17–37; that stretch reads SLYWGLLLIXVLAVLFSNYFF.

The protein belongs to the PsbL family. PSII is composed of 1 copy each of membrane proteins PsbA, PsbB, PsbC, PsbD, PsbE, PsbF, PsbH, PsbI, PsbJ, PsbK, PsbL, PsbM, PsbT, PsbX, PsbY, PsbZ, Psb30/Ycf12, at least 3 peripheral proteins of the oxygen-evolving complex and a large number of cofactors. It forms dimeric complexes.

It localises to the plastid. The protein resides in the chloroplast thylakoid membrane. Functionally, one of the components of the core complex of photosystem II (PSII). PSII is a light-driven water:plastoquinone oxidoreductase that uses light energy to abstract electrons from H(2)O, generating O(2) and a proton gradient subsequently used for ATP formation. It consists of a core antenna complex that captures photons, and an electron transfer chain that converts photonic excitation into a charge separation. This subunit is found at the monomer-monomer interface and is required for correct PSII assembly and/or dimerization. This is Photosystem II reaction center protein L from Allium textile (Textile onion).